We begin with the raw amino-acid sequence, 964 residues long: Adhesion defective protein 3 (964 aa).

The tract at residues 1-32 is disordered; sequence MADFMDIEPSSHSAKASQYESSAPASSSLGNS. Over residues 16 to 32 the composition is skewed to low complexity; sequence ASQYESSAPASSSLGNS. In terms of domain architecture, LisH spans 34–66; it reads PNESLDYYIYDYFVKHNFEEAAQAFLRESKIQI. Residues 69–83 show a composition bias toward low complexity; sequence SSSSTAFSPSNNNAP. Disordered regions lie at residues 69–125, 241–273, 476–523, 572–596, and 664–914; these read SSSS…EETN, PKGTPSTSIEGAKTSIPPSHAMQNPHNSFPASA, VSMK…TSRM, QTLSSGNQPPQQSGPNPNEFSMSMD, and APMI…KPIS. 3 stretches are compositionally biased toward polar residues: residues 93–103, 261–270, and 508–523; these read LASPSKISESI, AMQNPHNSFP, and TQANGSRYMNPSTSRM. Residues 575–589 are compositionally biased toward low complexity; the sequence is SSGNQPPQQSGPNPN. Composition is skewed to polar residues over residues 664-700, 707-716, 724-752, 767-801, 818-828, and 857-868; these read APMIQPNVPVSANSPAQANTPAADSTKSGTIQPTNRN, SPHQQFSPSA, RSMSPFVSQQQQLNQPVSNKPDGLTQNKE, AFPQSRTSWMMPQSFDTSSLNAPGAKDSSSFSSLH, TIRTTERSTFS, and GGTNSISQDTTQ. Over residues 869-885 the composition is skewed to low complexity; it reads SLQMQSNSVNSSSMVDA. Residues 894–905 are compositionally biased toward polar residues; it reads GDTSALDSNAKN.

The protein belongs to the FLO8 family.

The protein localises to the cytoplasm. It localises to the nucleus. In terms of biological role, probable transcriptional regulator involved in cell adhesion. This chain is Adhesion defective protein 3 (adn3), found in Schizosaccharomyces pombe (strain 972 / ATCC 24843) (Fission yeast).